A 519-amino-acid chain; its full sequence is Mannuronan C5-epimerase (519 aa).

Positions 1-25 are cleaved as a signal peptide; the sequence is MNLHPHLRHSLLASALLLASGLATA. PbH1 repeat units follow at residues 219 to 246, 281 to 303, 305 to 328, 330 to 352, 354 to 376, and 377 to 399; these read GTET…SISQ, TQDF…DPHD, SHRL…IVSR, VNDS…VIDR, SVNN…TLYE, and SGDN…RVRN. Residue His302 is the Proton acceptor of the active site.

This sequence belongs to the D-mannuronate C5-epimerase family.

The protein resides in the periplasm. It catalyses the reaction [(1-&gt;4)-beta-D-mannuronosyl](n) = [alginate](n). Its pathway is glycan biosynthesis; alginate biosynthesis. Functionally, catalyzes the epimerization of beta-D-mannuronate to alpha-L-guluronate during the synthesis of the linear polysaccharide alginate. In addition, is part of a periplasmic protein complex that protects alginate from degradation by AlgL by channeling the newly formed alginate polymer through a scaffold that transfers the alginate polymer through the periplasmic space to the outer membrane secretin AlgE. This is Mannuronan C5-epimerase (algG) from Pseudomonas putida (strain ATCC 47054 / DSM 6125 / CFBP 8728 / NCIMB 11950 / KT2440).